The chain runs to 282 residues: Protease HtpX homolog (282 aa).

2 helical membrane passes run 7-26 (TTVL…GAVG) and 30-49 (GMMI…YWFS). Position 131 (His131) interacts with Zn(2+). Glu132 is a catalytic residue. Residue His135 participates in Zn(2+) binding. Transmembrane regions (helical) follow at residues 141 to 161 (ILVS…ARMA) and 183 to 203 (LGLV…QLAI). Glu208 contributes to the Zn(2+) binding site.

Belongs to the peptidase M48B family. Zn(2+) serves as cofactor.

It is found in the cell inner membrane. The chain is Protease HtpX homolog from Syntrophobacter fumaroxidans (strain DSM 10017 / MPOB).